Consider the following 183-residue polypeptide: MFLVVGQGNPGERYARTRHNLGFMVLDRLGLSFRPRGEALVAEAEGGLFLKPLTYYNLTGRAVAPLARFYKIPPERILVVHDEMDLPLGRIRFKAGGSAAGNRGVLSIEEALGTRAFHRLRLGIGKPPDPSRGAEYVLSPFREEELPVVERVLEAAKEAVWCWVREGLPPCAGRFNGLDLSLG.

Residue Tyr-14 participates in tRNA binding. His-19 serves as the catalytic Proton acceptor. TRNA contacts are provided by Tyr-55 and Asn-57.

It belongs to the PTH family. As to quaternary structure, monomer.

Its subcellular location is the cytoplasm. It catalyses the reaction an N-acyl-L-alpha-aminoacyl-tRNA + H2O = an N-acyl-L-amino acid + a tRNA + H(+). Its function is as follows. Hydrolyzes ribosome-free peptidyl-tRNAs (with 1 or more amino acids incorporated), which drop off the ribosome during protein synthesis, or as a result of ribosome stalling. Functionally, catalyzes the release of premature peptidyl moieties from peptidyl-tRNA molecules trapped in stalled 50S ribosomal subunits, and thus maintains levels of free tRNAs and 50S ribosomes. This is Peptidyl-tRNA hydrolase from Thermus thermophilus (strain ATCC BAA-163 / DSM 7039 / HB27).